A 290-amino-acid polypeptide reads, in one-letter code: Ribosomal RNA small subunit methyltransferase A (290 aa).

Residues Asn-27, Leu-29, Gly-54, Glu-75, Asp-100, and Asn-125 each coordinate S-adenosyl-L-methionine.

The protein belongs to the class I-like SAM-binding methyltransferase superfamily. rRNA adenine N(6)-methyltransferase family. RsmA subfamily.

It is found in the cytoplasm. It catalyses the reaction adenosine(1518)/adenosine(1519) in 16S rRNA + 4 S-adenosyl-L-methionine = N(6)-dimethyladenosine(1518)/N(6)-dimethyladenosine(1519) in 16S rRNA + 4 S-adenosyl-L-homocysteine + 4 H(+). Its function is as follows. Specifically dimethylates two adjacent adenosines (A1518 and A1519) in the loop of a conserved hairpin near the 3'-end of 16S rRNA in the 30S particle. May play a critical role in biogenesis of 30S subunits. The sequence is that of Ribosomal RNA small subunit methyltransferase A from Streptococcus equi subsp. zooepidemicus (strain H70).